The primary structure comprises 777 residues: Androgen receptor (777 aa).

A modulating region spans residues 1 to 416 (MEVHIGLGGV…IDYYFPPQKP (416 aa)). Disordered stretches follow at residues 53 to 95 (CVHP…QAPQ), 110 to 132 (GEQGGMPEEGNSESASKEGYPES), and 205 to 241 (RRAGQSTYSAGKAPEDGSSLPTEDKEQPCTDMALSEP). 2 NR C4-type zinc fingers span residues 417–434 (CLSCEDEASGCHYEALTC) and 453–472 (CASRNDCTIDKFRRKNCPSC). The segment at residues 417 to 489 (CLSCEDEASG…AGMTLGARKL (73 aa)) is a DNA-binding region (nuclear receptor). One can recognise an NR LBD domain in the interval 526–757 (SCQPIFLNVL…DFPEMMSEII (232 aa)). 17beta-hydroxy-5alpha-androstan-3-one contacts are provided by Asn563, Arg610, and Thr735.

This sequence belongs to the nuclear hormone receptor family. NR3 subfamily. As to quaternary structure, binds DNA as a homodimer. Interacts via the ligand-binding domain with LXXLL and FXXLF motifs from coactivator proteins. Interacts (via ligand-binding domain) with TRIM68. As to expression, detected in somatic Leydig and Sertoli cells in testis with high level expression. Also detected at lower expression levels in forebrain and heart.

It localises to the nucleus. The protein resides in the cytoplasm. In terms of biological role, steroid hormone receptors are ligand-activated transcription factors that regulate eukaryotic gene expression and affect cellular proliferation and differentiation in target tissues. Transcription factor activity is modulated by bound coactivator and corepressor proteins. This is Androgen receptor (ar) from Aquarana catesbeiana (American bullfrog).